Here is a 221-residue protein sequence, read N- to C-terminus: D-glycero-alpha-D-manno-heptose 1-phosphate guanylyltransferase (221 aa).

The protein belongs to the D-alpha-D-heptose-1-P guanylyltransferase family.

The enzyme catalyses D-glycero-alpha-D-manno-heptose 1-phosphate + GTP + H(+) = GDP-D-glycero-alpha-D-manno-heptose + diphosphate. It functions in the pathway nucleotide-sugar biosynthesis; GDP-D-glycero-alpha-D-manno-heptose biosynthesis; GDP-D-glycero-alpha-D-manno-heptose from D-glycero-alpha-D-manno-heptose 7-phosphate: step 3/3. The protein operates within capsule biogenesis; capsule polysaccharide biosynthesis. Its function is as follows. Catalyzes the GDP transfer from GTP to D-glycero-alpha-D-manno-heptose 1-phosphate, yielding GDP-D-alpha-D-heptose. Is able to use ATP, CTP or UTP as substrate in the presence of pyrophosphatase, but at a significantly slower rate. Can also form GDP-alpha-D-mannose from alpha-D-mannose 1-phosphate and GTP. In Campylobacter jejuni subsp. jejuni serotype O:2 (strain ATCC 700819 / NCTC 11168), this protein is D-glycero-alpha-D-manno-heptose 1-phosphate guanylyltransferase.